The following is a 488-amino-acid chain: 3-octaprenyl-4-hydroxybenzoate carboxy-lyase (488 aa).

Asn-172 lines the Mn(2+) pocket. Residues 175-177 (IYR), 189-191 (RWL), and 194-195 (RG) contribute to the prenylated FMN site. Residue Glu-238 coordinates Mn(2+). Catalysis depends on Asp-287, which acts as the Proton donor.

This sequence belongs to the UbiD family. Homohexamer. The cofactor is prenylated FMN. Mn(2+) serves as cofactor.

Its subcellular location is the cell membrane. The catalysed reaction is a 4-hydroxy-3-(all-trans-polyprenyl)benzoate + H(+) = a 2-(all-trans-polyprenyl)phenol + CO2. Its pathway is cofactor biosynthesis; ubiquinone biosynthesis. Its function is as follows. Catalyzes the decarboxylation of 3-octaprenyl-4-hydroxy benzoate to 2-octaprenylphenol, an intermediate step in ubiquinone biosynthesis. This is 3-octaprenyl-4-hydroxybenzoate carboxy-lyase from Alteromonas mediterranea (strain DSM 17117 / CIP 110805 / LMG 28347 / Deep ecotype).